Here is a 476-residue protein sequence, read N- to C-terminus: Carbamoyl phosphate synthase arginine-specific small chain (476 aa).

Residues 1–24 (MFSHLLKPAARSAGLLGHVNRRYL) constitute a mitochondrion transit peptide. Residues 228–415 (HVALIDCGVK…IQNVQRYKDH (188 aa)) form the Glutamine amidotransferase type-1 domain. Cysteine 304 (nucleophile) is an active-site residue. Active-site residues include histidine 388 and glutamate 390.

The protein belongs to the CarA family. As to quaternary structure, heterodimer composed of 2 chains; the small (or glutamine) chain promotes the hydrolysis of glutamine to ammonia, which is used by the large (or ammonia) chain to synthesize carbamoyl phosphate.

Its subcellular location is the mitochondrion matrix. The catalysed reaction is hydrogencarbonate + L-glutamine + 2 ATP + H2O = carbamoyl phosphate + L-glutamate + 2 ADP + phosphate + 2 H(+). It catalyses the reaction L-glutamine + H2O = L-glutamate + NH4(+). It participates in amino-acid biosynthesis; L-arginine biosynthesis; carbamoyl phosphate from bicarbonate: step 1/1. Small subunit of the arginine-specific carbamoyl phosphate synthase (CPSase). CPSase catalyzes the formation of carbamoyl phosphate from the ammonia moiety of glutamine, carbonate, and phosphate donated by ATP, the first step of the arginine biosynthetic pathway. The small subunit (glutamine amidotransferase) binds and cleaves glutamine to supply the large subunit with the substrate ammonia. The polypeptide is Carbamoyl phosphate synthase arginine-specific small chain (CPA1) (Phaeosphaeria nodorum (strain SN15 / ATCC MYA-4574 / FGSC 10173) (Glume blotch fungus)).